The following is a 633-amino-acid chain: NADPH-dependent diflavin oxidoreductase 1 (633 aa).

The region spanning 5-149 (CTIIYATESG…EVEKWSQELI (145 aa)) is the Flavodoxin-like domain. Residues 11 to 16 (TESGTS), 58 to 61 (STTG), and aspartate 131 contribute to the FMN site. The 247-residue stretch at 196–442 (TQFYKSKLKV…FIKESGARLP (247 aa)) folds into the FAD-binding FR-type domain. Residues 377-380 (RPFS) and 412-415 (GLCS) each bind FAD. NADP(+)-binding positions include threonine 456, 520-521 (SR), 528-532 (KVYVQ), and aspartate 565. The tract at residues 580–610 (KNNNNNNNNNNNNNNNNNNNNNNNNNDDENN) is disordered. Residues 581–604 (NNNNNNNNNNNNNNNNNNNNNNNN) show a composition bias toward low complexity. Tryptophan 633 provides a ligand contact to FAD.

It belongs to the NADPH-dependent diflavin oxidoreductase NDOR1 family. In the N-terminal section; belongs to the flavodoxin family. This sequence in the C-terminal section; belongs to the flavoprotein pyridine nucleotide cytochrome reductase family. It depends on FAD as a cofactor. FMN serves as cofactor.

The protein resides in the cytoplasm. The catalysed reaction is 2 oxidized [2Fe-2S]-[protein] + NADPH = 2 reduced [2Fe-2S]-[protein] + NADP(+) + H(+). In terms of biological role, NADPH-dependent reductase which is a central component of the cytosolic iron-sulfur (Fe-S) protein assembly (CIA) machinery. Transfers electrons from NADPH via its FAD and FMN prosthetic groups to the [2Fe-2S] cluster of the anamorsin/DRE2 homolog, another key component of the CIA machinery. In turn, this reduced cluster provides electrons for assembly of cytosolic iron-sulfur cluster proteins. In Dictyostelium discoideum (Social amoeba), this protein is NADPH-dependent diflavin oxidoreductase 1 (redC).